Here is a 113-residue protein sequence, read N- to C-terminus: MGSPCALGLFCCCSSCFCLCCPRHRPASRLAAVVGGAAAVPAVVSGVTGLILSPSPSPIFIQPTPSPPMSFHNPGLELALDSRPAPLXPLGVTSPSAPPLPPVVDLPQLGLRR.

2 hydrophobic regions span residues 1–21 (MGSP…CLCC) and 32–52 (AVVG…GLIL). An interaction with host HPX region spans residues 27–67 (ASRLAAVVGGAAAVPAVVSGVTGLILSPSPSPIFIQPTPSP). An interaction with the capsid protein region spans residues 47 to 71 (VTGLILSPSPSPIFIQPTPSPPMSF). Serine 70 is modified (phosphoserine; by host). The segment at 71-113 (FHNPGLELALDSRPAPLXPLGVTSPSAPPLPPVVDLPQLGLRR) is homodimerization, and interaction with host AMBP/bikunin. Residues 90-113 (LGVTSPSAPPLPPVVDLPQLGLRR) form a disordered region. Residues 94–103 (SPSAPPLPPV) are interaction with host SRC, HCK, FYN, PIK3R3 and GRB2. The PTAP/PSAP motif signature appears at 95 to 98 (PSAP).

Belongs to the hepevirus ORF3 protein family. As to quaternary structure, forms homooligomers. Interacts with host SRC, HCK, FYN, PIK3R3 and GRB2 (via SH3 domain); binding does not activate the kinases. Interacts with host AMBP/bikunin and AMBP/alpha-1-microglobulin peptides. Interacts with host HPX/hemopexin. Interacts (when phosphorylated) with capsid protein ORF2. Interacts with host TSG101; this interaction plays a role in viral release from the host cell. Interacts with host SIRPA; this interaction down-regulates the phosphorylation of host IRF3. Palmitoylated in the N-terminus.

Its subcellular location is the host endoplasmic reticulum membrane. It localises to the host cytoplasm. It is found in the host cytoskeleton. The protein resides in the virion. The protein localises to the host cell membrane. Functionally, small multifunctional phosphoprotein involved in virion morphogenesis, egress and counteracting host innate immunity. Plays critical roles in the final steps of viral release by interacting with host TSG101, a member of the vacuolar protein-sorting pathway and using other cellular host proteins involved in vesicle formation pathway. Also acts as a viroporin and forms ion conductive pores allowing viral particle release. Impairs the generation of type I interferon by down-regulating host TLR3 and TLR7 as well as their downstream signaling pathways. Down-regulates the phosphorylation of host IRF3 via the interaction with host SIRP-alpha, thereby inhibiting IFN-I expression. Interacts with host microtubules. The chain is Protein ORF3 from Hepatitis E virus genotype 3 (isolate Human/United States/US2) (HEV-3).